The primary structure comprises 401 residues: Dual specificity mitogen-activated protein kinase kinase 2 (401 aa).

An N-acetylmethionine modification is found at Met-1. Ser-23 carries the post-translational modification Phosphoserine. One can recognise a Protein kinase domain in the interval 72-370 (FERISELGAG…LKLLMNHAFI (299 aa)). ATP is bound by residues 78–86 (LGAGNGGVV) and Lys-101. Asp-194 serves as the catalytic Proton acceptor. 2 positions are modified to phosphoserine; by RAF: Ser-222 and Ser-226. A disordered region spans residues 282–310 (PVVDGADGEPHSVSPRPRPPGRPISVGHG). Phosphoserine occurs at positions 293, 295, and 306. Thr-395 and Thr-397 each carry phosphothreonine.

This sequence belongs to the protein kinase superfamily. STE Ser/Thr protein kinase family. MAP kinase kinase subfamily. Interacts with MORG1. Interacts with SGK1. Interacts with KSR1. Interacts with KSR1 and BRAF; the interaction with KSR1 mediates KSR1-BRAF dimerization. Interacts with GLS. Mg(2+) serves as cofactor. Post-translationally, phosphorylation on Ser/Thr by MAP kinase kinase kinases (RAF or MEKK1) positively regulates the kinase activity. Phosphorylated by MAP2K1/MEK1. Low levels of autophosphorylation have been observed. As to expression, expressed in adult intestine, kidney, liver, lung, pancreas, spleen, thymus, and at high levels in the neonatal brain. Lower expression is found in adult brain and heart.

Its subcellular location is the cytoplasm. It localises to the membrane. The enzyme catalyses L-seryl-[protein] + ATP = O-phospho-L-seryl-[protein] + ADP + H(+). It catalyses the reaction L-threonyl-[protein] + ATP = O-phospho-L-threonyl-[protein] + ADP + H(+). The catalysed reaction is L-tyrosyl-[protein] + ATP = O-phospho-L-tyrosyl-[protein] + ADP + H(+). Inhibited by serine/threonine phosphatase 2A. Functionally, catalyzes the concomitant phosphorylation of a threonine and a tyrosine residue in a Thr-Glu-Tyr sequence located in MAP kinases. Activates the ERK1 and ERK2 MAP kinases. Activates BRAF in a KSR1 or KSR2-dependent manner; by binding to KSR1 or KSR2 releases the inhibitory intramolecular interaction between KSR1 or KSR2 protein kinase and N-terminal domains which promotes KSR1 or KSR2-BRAF dimerization and BRAF activation. This chain is Dual specificity mitogen-activated protein kinase kinase 2 (Map2k2), found in Mus musculus (Mouse).